The sequence spans 476 residues: MKILFVAAEGAPFAKTGGLGDVIGALPKSLVKNNNEVSVILPYYDVVDAKFGDQIEDLFYFFTNVGWRREYVGIKHIFRDGVDFYFIDNKHYFYRGQIYGEFDDGERFAYFQLAALEAMEKIQFIPDILHVHDYHTAMIPYLLKEKYHWINAYHGIKTVFTIHNIEFQGQFNPSMLGELFGVGDERYRDGTLRWNDCLNWMKAAVLYADRVTTVSPSYAKEIMTPEFGKGLDQIMRMESGKLSGVVNGIDTDLFDPETDPHLAVHFSKDDLSGKAKNKAALQERVGLPVREDVPLVGIVSRLTDQKGFQLVVDQLNTMMQLDLQIVLLGTGYADFENAFAWFGHAYPDKMSANITFDLELAQQIYAASDIFLMPSAFEPCGLSQMMAMRYGTLPLVHEVGGLRDTVIPYNEFEKTGTGFGFQDFSGYWLTKTLEAALDVYYNRKEDWKILQKNAMTTDFSWDTASQSYEHLYKELA.

Residue lysine 15 coordinates ADP-alpha-D-glucose.

It belongs to the glycosyltransferase 1 family. Bacterial/plant glycogen synthase subfamily.

It carries out the reaction [(1-&gt;4)-alpha-D-glucosyl](n) + ADP-alpha-D-glucose = [(1-&gt;4)-alpha-D-glucosyl](n+1) + ADP + H(+). The protein operates within glycan biosynthesis; glycogen biosynthesis. In terms of biological role, synthesizes alpha-1,4-glucan chains using ADP-glucose. This Streptococcus mutans serotype c (strain ATCC 700610 / UA159) protein is Glycogen synthase.